A 138-amino-acid chain; its full sequence is Small ribosomal subunit protein uS11c (138 aa).

It belongs to the universal ribosomal protein uS11 family. Part of the 30S ribosomal subunit.

It localises to the plastid. The protein resides in the chloroplast. This is Small ribosomal subunit protein uS11c from Phalaenopsis aphrodite subsp. formosana (Moth orchid).